The chain runs to 237 residues: Phosphatidylserine decarboxylase proenzyme (237 aa).

The Schiff-base intermediate with substrate; via pyruvic acid role is filled by serine 206. Serine 206 carries the pyruvic acid (Ser); by autocatalysis modification.

It belongs to the phosphatidylserine decarboxylase family. PSD-A subfamily. Heterodimer of a large membrane-associated beta subunit and a small pyruvoyl-containing alpha subunit. Requires pyruvate as cofactor. Post-translationally, is synthesized initially as an inactive proenzyme. Formation of the active enzyme involves a self-maturation process in which the active site pyruvoyl group is generated from an internal serine residue via an autocatalytic post-translational modification. Two non-identical subunits are generated from the proenzyme in this reaction, and the pyruvate is formed at the N-terminus of the alpha chain, which is derived from the carboxyl end of the proenzyme. The post-translation cleavage follows an unusual pathway, termed non-hydrolytic serinolysis, in which the side chain hydroxyl group of the serine supplies its oxygen atom to form the C-terminus of the beta chain, while the remainder of the serine residue undergoes an oxidative deamination to produce ammonia and the pyruvoyl prosthetic group on the alpha chain.

The protein resides in the cell membrane. It catalyses the reaction a 1,2-diacyl-sn-glycero-3-phospho-L-serine + H(+) = a 1,2-diacyl-sn-glycero-3-phosphoethanolamine + CO2. It functions in the pathway phospholipid metabolism; phosphatidylethanolamine biosynthesis; phosphatidylethanolamine from CDP-diacylglycerol: step 2/2. Catalyzes the formation of phosphatidylethanolamine (PtdEtn) from phosphatidylserine (PtdSer). The protein is Phosphatidylserine decarboxylase proenzyme of Nocardia farcinica (strain IFM 10152).